The primary structure comprises 383 residues: tRNA-specific 2-thiouridylase MnmA (383 aa).

ATP contacts are provided by residues 6–13 (AMSGGVDS) and Leu-32. Residue Cys-101 is the Nucleophile of the active site. Cys-101 and Cys-199 are joined by a disulfide. Gly-125 is a binding site for ATP. Positions 148-150 (KDQ) are interaction with tRNA. The active-site Cysteine persulfide intermediate is Cys-199.

Belongs to the MnmA/TRMU family.

It localises to the cytoplasm. It catalyses the reaction S-sulfanyl-L-cysteinyl-[protein] + uridine(34) in tRNA + AH2 + ATP = 2-thiouridine(34) in tRNA + L-cysteinyl-[protein] + A + AMP + diphosphate + H(+). In terms of biological role, catalyzes the 2-thiolation of uridine at the wobble position (U34) of tRNA, leading to the formation of s(2)U34. This chain is tRNA-specific 2-thiouridylase MnmA, found in Kocuria rhizophila (strain ATCC 9341 / DSM 348 / NBRC 103217 / DC2201).